The chain runs to 356 residues: tRNA (guanine(26)-N(2))-dimethyltransferase (356 aa).

The Trm1 methyltransferase domain maps to 5–352; sequence VLRREGTVEF…VSAGEVERVL (348 aa). S-adenosyl-L-methionine-binding residues include arginine 40, arginine 67, aspartate 85, aspartate 111, and alanine 112.

It belongs to the class I-like SAM-binding methyltransferase superfamily. Trm1 family.

It carries out the reaction guanosine(26) in tRNA + 2 S-adenosyl-L-methionine = N(2)-dimethylguanosine(26) in tRNA + 2 S-adenosyl-L-homocysteine + 2 H(+). Its function is as follows. Dimethylates a single guanine residue at position 26 of a number of tRNAs using S-adenosyl-L-methionine as donor of the methyl groups. In Pyrobaculum arsenaticum (strain DSM 13514 / JCM 11321 / PZ6), this protein is tRNA (guanine(26)-N(2))-dimethyltransferase.